We begin with the raw amino-acid sequence, 453 residues long: MARKAVSRKRKASASPGAGSDAQGPQFGWDHSLHKRKRLPPVKRSLVYYLKNREVRLQNETSYSRLLHGYAAQQLPSLLKEREFHLGTLNKVFASQWLNHRQVVCGTKCNTLFVVDVQTGQITKIPILKDREPGGVTQQGCGIHAIELNPSRTLLATGGDNPNSLAIYRLPTLDPVCVGDDGHKDWIFSIAWINDTMAVSGSRDGSMGLWEVTDDVLTKSDARHNVSPVPVYAHITHKALKDIPKEDTNPDNCKVRALAFNNKNKELGAVSLDGYFHLWKAENTLSKLLSTKLPYCRENVCLAYGSEWSVYAVGSQAHVSFLDPRQPSYNVKSVCSRERGSGIRSVSFYEHIITVGTGQGSLLFYDIRAQRFLEERLSACYGSKPRLAGENLKLTTGRGWLNHDETWRNYFSDIDFFPNAVYTHCYDSSGTKLFVAGGPLPSGLHGNYAGLWS.

A compositionally biased stretch (basic residues) spans 1 to 12 (MARKAVSRKRKA). The segment at 1–34 (MARKAVSRKRKASASPGAGSDAQGPQFGWDHSLH) is disordered. The interval 1–38 (MARKAVSRKRKASASPGAGSDAQGPQFGWDHSLHKRKR) is required for nuclear location and interaction with MOV10. Ser15 carries the post-translational modification Phosphoserine. WD repeat units lie at residues 138-178 (QQGC…PVCV), 182-220 (GHKD…LTKS), 250-289 (PDNC…SKLL), and 338-375 (ERGS…FLEE).

The protein belongs to the WD repeat DCAF12 family. In terms of assembly, component of the DCX(DCAF12) E3 ubiquitin ligase complex, at least composed of CUL4 (CUL4A or CUL4B), DDB1, DCAF12 and RBX1.

It localises to the cytoplasm. It is found in the cytoskeleton. The protein localises to the microtubule organizing center. Its subcellular location is the centrosome. The protein resides in the nucleus. It participates in protein modification; protein ubiquitination. Substrate-recognition component of a DCX (DDB1-CUL4-X-box) E3 ubiquitin-protein ligase complex of the DesCEND (destruction via C-end degrons) pathway, which recognizes a C-degron located at the extreme C terminus of target proteins, leading to their ubiquitination and degradation. The C-degron recognized by the DesCEND pathway is usually a motif of less than ten residues and can be present in full-length proteins, truncated proteins or proteolytically cleaved forms. The DCX(DCAF12) complex specifically recognizes proteins with a diglutamate (Glu-Glu) at the C-terminus, such as MAGEA3, MAGEA6 and CCT5, leading to their ubiquitination and degradation. Ubiquitination of MAGEA3, MAGEA6 by DCX(DCAF12) complex is required for starvation-induced autophagy. Also directly recognizes the C-terminal glutamate-leucine (Glu-Leu) degron as an alternative degron in proteins such as MOV10, leading to their ubiquitination and degradation. Controls the protein level of MOV10 during spermatogenesis and in T cells, especially after their activation. This chain is DDB1- and CUL4-associated factor 12, found in Mus musculus (Mouse).